The following is a 217-amino-acid chain: MLO-like protein (217 aa).

Helical transmembrane passes span 35–55 (FKVVVGISPILWFFAVLFLLS), 59–79 (GWVAYLWLPFIPLIIILVVGT), and 119–139 (LVLFLIHFCLFQNAFQLAFFI).

This sequence belongs to the MLO family.

It is found in the membrane. Functionally, may be involved in modulation of pathogen defense and leaf cell death. The chain is MLO-like protein from Linum usitatissimum (Flax).